The sequence spans 248 residues: Caffeoyl-CoA O-methyltransferase 3 (248 aa).

Residue K22 coordinates substrate. S-adenosyl-L-methionine contacts are provided by residues T64, E86, 88-89, S94, D112, and A141; that span reads GV. D164 is a substrate binding site. D164 is an a divalent metal cation binding site. An S-adenosyl-L-methionine-binding site is contributed by D166. A divalent metal cation contacts are provided by D190 and N191. Position 195 (N195) interacts with substrate.

Belongs to the class I-like SAM-binding methyltransferase superfamily. Cation-dependent O-methyltransferase family. CCoAMT subfamily. It depends on a divalent metal cation as a cofactor. In terms of tissue distribution, mostly expressed in petal limbs and tubes, and, at low levels, in stems, roots and leaves.

The protein localises to the cytoplasm. Its subcellular location is the cytosol. The catalysed reaction is (E)-caffeoyl-CoA + S-adenosyl-L-methionine = (E)-feruloyl-CoA + S-adenosyl-L-homocysteine + H(+). The enzyme catalyses (E)-5-hydroxyferuloyl-CoA + S-adenosyl-L-methionine = (E)-sinapoyl-CoA + S-adenosyl-L-homocysteine + H(+). The protein operates within aromatic compound metabolism; phenylpropanoid biosynthesis. Functionally, involved in the production of floral volatile phenylpropanoids in flowers of fragrant cultivars (e.g. cv. Mitchell and cv. V26) from cinnamic acid, a common precursor with the anthocyanin biosynthesis pathway involved in flower pigmentation. Methylates caffeoyl-CoA to feruloyl-CoA, also able to methylate 5-hydroxyferuloyl-CoA. In Petunia hybrida (Petunia), this protein is Caffeoyl-CoA O-methyltransferase 3.